Consider the following 507-residue polypeptide: Archaeal-type glutamate synthase [NADPH] (507 aa).

4Fe-4S ferredoxin-type domains follow at residues 10 to 39 (FVVE…YDEN) and 41 to 70 (NRVY…VRKN). [4Fe-4S] cluster-binding residues include Cys19, Cys22, Cys25, Cys29, Cys50, Cys53, Cys56, and Cys60.

This sequence belongs to the glutamate synthase family. It depends on FMN as a cofactor.

The enzyme catalyses 2 L-glutamate + NADP(+) = L-glutamine + 2-oxoglutarate + NADPH + H(+). This chain is Archaeal-type glutamate synthase [NADPH], found in Thermotoga maritima (strain ATCC 43589 / DSM 3109 / JCM 10099 / NBRC 100826 / MSB8).